A 51-amino-acid chain; its full sequence is Large ribosomal subunit protein bL33 (51 aa).

Belongs to the bacterial ribosomal protein bL33 family.

The polypeptide is Large ribosomal subunit protein bL33 (Nitrosospira multiformis (strain ATCC 25196 / NCIMB 11849 / C 71)).